Consider the following 393-residue polypeptide: MGEGGAAAALVAAAAAAAAAAAAVVAGQRRRRLGRRARCHGPGRAAGGKMSKPCAVEAAAAAVAATAPGPEMVERRGPGRPRTDGENVFTGQSKIYSYMSPNKCSGMRFPLQEENSVTHHEVKCQGKPLAGIYRKREEKRNAGNAVRSAMKSEEQKIKDARKGPLVPFPNQKSEAAEPPKTPPSSCDSTNAAIAKQALKKPIKGKQAPRKKAQGKTQQNRKLTDFYPVRRSSRKSKAELQSEERKRIDELIESGKEEGMKIDLIDGKGRGVIATKQFSRGDFVVEYHGDLIEITDAKKREALYAQDPSTGCYMYYFQYLSKTYCVDATRETNRLGRLINHSKCGNCQTKLHDIDGVPHLILIASRDIAAGEELLYDYGDRSKASIEAHPWLKH.

A disordered region spans residues 68–88; that stretch reads PGPEMVERRGPGRPRTDGENV. Positions 72–85 are enriched in basic and acidic residues; the sequence is MVERRGPGRPRTDG. Phosphoserine is present on Ser100. Residues 134 to 163 are a coiled coil; the sequence is RKREEKRNAGNAVRSAMKSEEQKIKDARKG. Residues 135 to 241 form a disordered region; it reads KREEKRNAGN…SRKSKAELQS (107 aa). Residues 150-162 are compositionally biased toward basic and acidic residues; the sequence is MKSEEQKIKDARK. Residue Lys162 is modified to N6-acetyllysine. Thr181 is modified (phosphothreonine). Basic residues predominate over residues 197–213; the sequence is ALKKPIKGKQAPRKKAQ. Residues 257–378 form the SET domain; that stretch reads EGMKIDLIDG…AGEELLYDYG (122 aa). S-adenosyl-L-methionine is bound by residues 267-269, Tyr312, and 339-340; these read KGR and NH.

This sequence belongs to the class V-like SAM-binding methyltransferase superfamily. Histone-lysine methyltransferase family. PR/SET subfamily. In terms of assembly, interacts with L3MBTL1. Interacts with SIRT2 (phosphorylated form); the interaction is direct, stimulates KMT5A-mediated methyltransferase activity at histone H4 'Lys-20' (H4K20me1) and is increased in a H(2)O(2)-induced oxidative stress-dependent manner. In terms of processing, acetylated at Lys-162; does not affect methyltransferase activity. Deacetylated at Lys-162 possibly by SIRT2; does not change methyltransferase activity. Ubiquitinated and degraded by the DCX(DTL) complex.

The protein localises to the nucleus. Its subcellular location is the chromosome. It carries out the reaction L-lysyl(20)-[histone H4] + S-adenosyl-L-methionine = N(6)-methyl-L-lysyl(20)-[histone H4] + S-adenosyl-L-homocysteine + H(+). It catalyses the reaction L-lysyl-[protein] + S-adenosyl-L-methionine = N(6)-methyl-L-lysyl-[protein] + S-adenosyl-L-homocysteine + H(+). Functionally, protein-lysine N-methyltransferase that monomethylates both histones and non-histone proteins. Specifically monomethylates 'Lys-20' of histone H4 (H4K20me1). H4K20me1 is enriched during mitosis and represents a specific tag for epigenetic transcriptional repression. Mainly functions in euchromatin regions, thereby playing a central role in the silencing of euchromatic genes. Required for cell proliferation, probably by contributing to the maintenance of proper higher-order structure of DNA during mitosis. Involved in chromosome condensation and proper cytokinesis. Nucleosomes are preferred as substrate compared to free histones. Mediates monomethylation of p53/TP53 at 'Lys-382', leading to repress p53/TP53-target genes. Plays a negative role in TGF-beta response regulation and a positive role in cell migration. The chain is N-lysine methyltransferase KMT5A from Homo sapiens (Human).